Reading from the N-terminus, the 126-residue chain is Small ribosomal subunit protein uS13c (126 aa).

The interval 97-126 is disordered; it reads PLRGQRTRTNARTRRGGKKTVAGKKKAPRK. A compositionally biased stretch (basic residues) spans 101-126; that stretch reads QRTRTNARTRRGGKKTVAGKKKAPRK.

It belongs to the universal ribosomal protein uS13 family. As to quaternary structure, part of the 30S ribosomal subunit.

It is found in the plastid. It localises to the chloroplast. Its function is as follows. Located at the top of the head of the 30S subunit, it contacts several helices of the 16S rRNA. The sequence is that of Small ribosomal subunit protein uS13c from Pyropia yezoensis (Susabi-nori).